We begin with the raw amino-acid sequence, 304 residues long: 2-phospho-L-lactate transferase (304 aa).

D49 contributes to the 7,8-didemethyl-8-hydroxy-5-deazariboflavin binding site.

Belongs to the CofD family. Homodimer. Mg(2+) is required as a cofactor.

The enzyme catalyses (2S)-lactyl-2-diphospho-5'-guanosine + 7,8-didemethyl-8-hydroxy-5-deazariboflavin = oxidized coenzyme F420-0 + GMP + H(+). The protein operates within cofactor biosynthesis; coenzyme F420 biosynthesis. Functionally, catalyzes the transfer of the 2-phospholactate moiety from (2S)-lactyl-2-diphospho-5'-guanosine to 7,8-didemethyl-8-hydroxy-5-deazariboflavin (FO) with the formation of oxidized coenzyme F420-0 and GMP. This Methanocorpusculum labreanum (strain ATCC 43576 / DSM 4855 / Z) protein is 2-phospho-L-lactate transferase.